Consider the following 245-residue polypeptide: MKIDYLTLFPEMFEGVLNHSILKRAQDKGIINVNTINFRDYSINKHNQVDDYPFGGGQGMVLKPEPVFNAMEDINHNEHTRVILMCPQGRPFTQEIAQELSEAKHIVFICGHYEGYDERIRKHLVTDEISMGDYVLTGGELPAMTMTDAIVRLIPGVLGNQASHQDDSFSDGLLEFPQYTRPREYKNMSVPEVLLSGNHAHIDQWRHEQKLIRTYEKRPDLLEQYPLTEKDREILETYKKKLKND.

S-adenosyl-L-methionine-binding positions include G111 and 131–136 (MGDYVL).

Belongs to the RNA methyltransferase TrmD family. As to quaternary structure, homodimer.

It is found in the cytoplasm. It catalyses the reaction guanosine(37) in tRNA + S-adenosyl-L-methionine = N(1)-methylguanosine(37) in tRNA + S-adenosyl-L-homocysteine + H(+). In terms of biological role, specifically methylates guanosine-37 in various tRNAs. This Staphylococcus epidermidis (strain ATCC 12228 / FDA PCI 1200) protein is tRNA (guanine-N(1)-)-methyltransferase.